Reading from the N-terminus, the 511-residue chain is Maturase K (511 aa).

The protein belongs to the intron maturase 2 family. MatK subfamily.

The protein localises to the plastid. It localises to the chloroplast. Functionally, usually encoded in the trnK tRNA gene intron. Probably assists in splicing its own and other chloroplast group II introns. This chain is Maturase K, found in Hordeum vulgare subsp. spontaneum (Wild barley).